Consider the following 648-residue polypeptide: Bifunctional protein TilS/HprT (648 aa).

29–34 (SGGPDS) contacts ATP. Asp627 is a binding site for Mg(2+).

The protein in the N-terminal section; belongs to the tRNA(Ile)-lysidine synthase family. In the C-terminal section; belongs to the purine/pyrimidine phosphoribosyltransferase family. Requires Mg(2+) as cofactor.

It localises to the cytoplasm. The enzyme catalyses IMP + diphosphate = hypoxanthine + 5-phospho-alpha-D-ribose 1-diphosphate. It carries out the reaction GMP + diphosphate = guanine + 5-phospho-alpha-D-ribose 1-diphosphate. It catalyses the reaction cytidine(34) in tRNA(Ile2) + L-lysine + ATP = lysidine(34) in tRNA(Ile2) + AMP + diphosphate + H(+). In terms of biological role, ligates lysine onto the cytidine present at position 34 of the AUA codon-specific tRNA(Ile) that contains the anticodon CAU, in an ATP-dependent manner. Cytidine is converted to lysidine, thus changing the amino acid specificity of the tRNA from methionine to isoleucine. In Listeria monocytogenes serovar 1/2a (strain ATCC BAA-679 / EGD-e), this protein is Bifunctional protein TilS/HprT (tilS/hprT).